A 342-amino-acid chain; its full sequence is Galactose mutarotase (342 aa).

Ser14 is subject to Phosphoserine. Beta-D-galactose contacts are provided by residues 81 to 82 (NR) and His107. A Phosphoserine modification is found at Ser124. His176 acts as the Proton donor in catalysis. Beta-D-galactose contacts are provided by residues 176 to 178 (HSY), Asp243, Gln279, and Glu307. Glu307 acts as the Proton acceptor in catalysis.

Belongs to the aldose epimerase family. As to quaternary structure, monomer.

It is found in the cytoplasm. It carries out the reaction alpha-D-galactose = beta-D-galactose. The catalysed reaction is alpha-D-glucose = beta-D-glucose. It participates in carbohydrate metabolism; hexose metabolism. It functions in the pathway carbohydrate metabolism; galactose metabolism. Mutarotase that catalyzes the interconversion of beta-D-galactose and alpha-D-galactose during galactose metabolism. Beta-D-galactose is metabolized in the liver into glucose 1-phosphate, the primary metabolic fuel, by the action of four enzymes that constitute the Leloir pathway: GALM, GALK1 (galactokinase), GALT (galactose-1-phosphate uridylyltransferase) and GALE (UDP-galactose-4'-epimerase). Involved in the maintenance of the equilibrium between the beta- and alpha-anomers of galactose, therefore ensuring a sufficient supply of the alpha-anomer for GALK1. Also active on D-glucose although shows a preference for galactose over glucose. The sequence is that of Galactose mutarotase (GALM) from Sus scrofa (Pig).